Here is a 476-residue protein sequence, read N- to C-terminus: Glycogen synthase (476 aa).

Lys15 contributes to the ADP-alpha-D-glucose binding site.

It belongs to the glycosyltransferase 1 family. Bacterial/plant glycogen synthase subfamily.

The enzyme catalyses [(1-&gt;4)-alpha-D-glucosyl](n) + ADP-alpha-D-glucose = [(1-&gt;4)-alpha-D-glucosyl](n+1) + ADP + H(+). It functions in the pathway glycan biosynthesis; glycogen biosynthesis. In terms of biological role, synthesizes alpha-1,4-glucan chains using ADP-glucose. The sequence is that of Glycogen synthase from Lactobacillus acidophilus (strain ATCC 700396 / NCK56 / N2 / NCFM).